Reading from the N-terminus, the 585-residue chain is Glycerol-3-phosphate dehydrogenase 2 (585 aa).

Residue 37–65 coordinates FAD; the sequence is DVVVIGGGVVGSGCALDAATRGLKVALVE.

This sequence belongs to the FAD-dependent glycerol-3-phosphate dehydrogenase family. Requires FAD as cofactor.

It is found in the cytoplasm. It carries out the reaction a quinone + sn-glycerol 3-phosphate = dihydroxyacetone phosphate + a quinol. The chain is Glycerol-3-phosphate dehydrogenase 2 (glpD2) from Mycobacterium bovis (strain ATCC BAA-935 / AF2122/97).